The primary structure comprises 230 residues: Cytidylate kinase (230 aa).

Position 12–20 (12–20) interacts with ATP; it reads GPSGAGKGT.

This sequence belongs to the cytidylate kinase family. Type 1 subfamily.

The protein resides in the cytoplasm. The enzyme catalyses CMP + ATP = CDP + ADP. It carries out the reaction dCMP + ATP = dCDP + ADP. The sequence is that of Cytidylate kinase from Aeromonas salmonicida (strain A449).